A 524-amino-acid polypeptide reads, in one-letter code: Probable serine/threonine-protein kinase WNK10 (524 aa).

Positions 16 to 273 (IRYNDVLGRG…ALELLKDQLL (258 aa)) constitute a Protein kinase domain. ATP-binding positions include 96–99 (TELF) and Lys146. Catalysis depends on Asp163, which acts as the Proton acceptor. Ser477 is modified (phosphoserine). A coiled-coil region spans residues 480–523 (SNKQSEDLKTELNVIESQYNQSCQRLLRMKEEAIEKAKRKWMKL).

It belongs to the protein kinase superfamily. Ser/Thr protein kinase family. WNK subfamily.

It carries out the reaction L-seryl-[protein] + ATP = O-phospho-L-seryl-[protein] + ADP + H(+). It catalyses the reaction L-threonyl-[protein] + ATP = O-phospho-L-threonyl-[protein] + ADP + H(+). Its function is as follows. May regulate flowering time by modulating the photoperiod pathway. This Arabidopsis thaliana (Mouse-ear cress) protein is Probable serine/threonine-protein kinase WNK10 (WNK10).